The following is a 61-amino-acid chain: ERMES regulator 1 (61 aa).

Residues 1–20 are Mitochondrial intermembrane-facing; that stretch reads MLPNLRRIFASFRTEEEERS. A helical transmembrane segment spans residues 21 to 43; it reads YSRKAFFHLIGYITCSVLFSWLV. Residues 44-61 lie on the Cytoplasmic side of the membrane; the sequence is RKKVISSPVVSSPIHALS.

The protein belongs to the EMR1 family. Interacts with the ER-mitochondria encounter structure (ERMES) complex. Interacts with mdm12. Interacts with mdm34.

The protein localises to the mitochondrion outer membrane. In terms of biological role, mediates the formation of endoplasmic reticulum (ER)-mitochondria encounter structure (ERMES) foci, thereby contributing to the formation of ER-mitochondrial contact sites. The chain is ERMES regulator 1 from Schizosaccharomyces pombe (strain 972 / ATCC 24843) (Fission yeast).